Here is a 210-residue protein sequence, read N- to C-terminus: Large ribosomal subunit protein uL4 (210 aa).

It belongs to the universal ribosomal protein uL4 family. In terms of assembly, part of the 50S ribosomal subunit.

Its function is as follows. One of the primary rRNA binding proteins, this protein initially binds near the 5'-end of the 23S rRNA. It is important during the early stages of 50S assembly. It makes multiple contacts with different domains of the 23S rRNA in the assembled 50S subunit and ribosome. Functionally, forms part of the polypeptide exit tunnel. The chain is Large ribosomal subunit protein uL4 (rplD) from Thermus thermophilus.